A 550-amino-acid chain; its full sequence is Glucose import ATP-binding protein TsgD13 (550 aa).

ABC transporter domains lie at 7 to 270 and 287 to 533; these read LRME…VGRE and LRAR…TGGG. Position 39–46 (39–46) interacts with ATP; sequence GENGAGKS. The disordered stretch occupies residues 529–550; sequence MTGGGDATATAGAQVRGLGGSS.

The protein belongs to the ABC transporter superfamily. The complex is composed of two ATP-binding proteins (TsgD13), two transmembrane proteins (TsgB13 and TsgC13) and a solute-binding protein (TsgA13).

The protein resides in the cell membrane. It carries out the reaction D-glucose(out) + ATP + H2O = D-glucose(in) + ADP + phosphate + H(+). In terms of biological role, part of an ABC transporter complex involved in glucose import. Responsible for energy coupling to the transport system. The sequence is that of Glucose import ATP-binding protein TsgD13 (tsgD13) from Haloferax volcanii (strain ATCC 29605 / DSM 3757 / JCM 8879 / NBRC 14742 / NCIMB 2012 / VKM B-1768 / DS2) (Halobacterium volcanii).